The chain runs to 352 residues: DNA polymerase IV (352 aa).

Residues 3–187 (VLFVDFDYFY…LDIADVPGIG (185 aa)) enclose the UmuC domain. Residues aspartate 7 and aspartate 105 each coordinate Mg(2+). Glutamate 106 is a catalytic residue.

Belongs to the DNA polymerase type-Y family. Monomer. Interacts with the PCNA heterotrimer via PCNA1. It depends on Mg(2+) as a cofactor.

It localises to the cytoplasm. It carries out the reaction DNA(n) + a 2'-deoxyribonucleoside 5'-triphosphate = DNA(n+1) + diphosphate. Poorly processive, error-prone DNA polymerase involved in untargeted mutagenesis. Copies undamaged DNA at stalled replication forks, which arise in vivo from mismatched or misaligned primer ends. These misaligned primers can be extended by PolIV. Exhibits no 3'-5' exonuclease (proofreading) activity. It is involved in translesional synthesis. This chain is DNA polymerase IV (dbh), found in Saccharolobus solfataricus (strain ATCC 35092 / DSM 1617 / JCM 11322 / P2) (Sulfolobus solfataricus).